The primary structure comprises 175 residues: Ribosome maturation factor RimM (175 aa).

Residues 96–175 form the PRC barrel domain; that stretch reads EGDYYWHDLI…TIEVDWDAGF (80 aa).

This sequence belongs to the RimM family. Binds ribosomal protein uS19.

It localises to the cytoplasm. Its function is as follows. An accessory protein needed during the final step in the assembly of 30S ribosomal subunit, possibly for assembly of the head region. Essential for efficient processing of 16S rRNA. May be needed both before and after RbfA during the maturation of 16S rRNA. It has affinity for free ribosomal 30S subunits but not for 70S ribosomes. This Haemophilus influenzae (strain PittEE) protein is Ribosome maturation factor RimM.